Consider the following 258-residue polypeptide: Transcription cofactor vestigial-like protein 1 (258 aa).

2 stretches are compositionally biased toward polar residues: residues 55–65 (PQELTPSSQSE) and 74–87 (SMSP…SPWT). The disordered stretch occupies residues 55–93 (PQELTPSSQSEGVMLKNDDSMSPNQWRYSSPWTKPQPEV).

The protein belongs to the vestigial family. In terms of assembly, interacts with TEFs.

It localises to the nucleus. In terms of biological role, may act as a specific coactivator for the mammalian TEFs. The polypeptide is Transcription cofactor vestigial-like protein 1 (VGLL1) (Homo sapiens (Human)).